The following is a 104-amino-acid chain: Large ribosomal subunit protein uL24 (104 aa).

The protein belongs to the universal ribosomal protein uL24 family. As to quaternary structure, part of the 50S ribosomal subunit.

In terms of biological role, one of two assembly initiator proteins, it binds directly to the 5'-end of the 23S rRNA, where it nucleates assembly of the 50S subunit. Functionally, one of the proteins that surrounds the polypeptide exit tunnel on the outside of the subunit. In Methylorubrum populi (strain ATCC BAA-705 / NCIMB 13946 / BJ001) (Methylobacterium populi), this protein is Large ribosomal subunit protein uL24.